Consider the following 86-residue polypeptide: Sec-independent protein translocase protein TatA (86 aa).

Residues 1–21 form a helical membrane-spanning segment; sequence MGGISIWQLLIIAVIVVLLFG. Positions 42-86 are disordered; sequence AIGDDNQPQQAQKTSSDADFETKNITEKQSVAQSETSESKNKEQV. Polar residues-rich tracts occupy residues 47–58 and 68–77; these read NQPQQAQKTSSD and EKQSVAQSET.

Belongs to the TatA/E family. As to quaternary structure, the Tat system comprises two distinct complexes: a TatABC complex, containing multiple copies of TatA, TatB and TatC subunits, and a separate TatA complex, containing only TatA subunits. Substrates initially bind to the TatABC complex, which probably triggers association of the separate TatA complex to form the active translocon.

It localises to the cell inner membrane. Its function is as follows. Part of the twin-arginine translocation (Tat) system that transports large folded proteins containing a characteristic twin-arginine motif in their signal peptide across membranes. TatA could form the protein-conducting channel of the Tat system. The sequence is that of Sec-independent protein translocase protein TatA from Photorhabdus laumondii subsp. laumondii (strain DSM 15139 / CIP 105565 / TT01) (Photorhabdus luminescens subsp. laumondii).